The primary structure comprises 209 residues: Large ribosomal subunit protein uL3 (209 aa).

The interval 127 to 166 (NFGGGSRTHGQSDRLRAPGSVGGSSDPSRTFKGTRMAGRM) is disordered.

The protein belongs to the universal ribosomal protein uL3 family. Part of the 50S ribosomal subunit. Forms a cluster with proteins L14 and L19.

In terms of biological role, one of the primary rRNA binding proteins, it binds directly near the 3'-end of the 23S rRNA, where it nucleates assembly of the 50S subunit. The chain is Large ribosomal subunit protein uL3 from Chlorobaculum tepidum (strain ATCC 49652 / DSM 12025 / NBRC 103806 / TLS) (Chlorobium tepidum).